A 344-amino-acid polypeptide reads, in one-letter code: Rho guanine nucleotide exchange factor 39 (344 aa).

The DH domain occupies 22 to 197; the sequence is KRVCTARELL…SETAQKVHAI (176 aa). One can recognise a PH domain in the interval 227-331; sequence WFLRQGWLLV…WHHSLTLAIR (105 aa).

Its subcellular location is the cell membrane. In terms of biological role, promotes cell proliferation. This Mus musculus (Mouse) protein is Rho guanine nucleotide exchange factor 39 (Arhgef39).